We begin with the raw amino-acid sequence, 173 residues long: Small ribosomal subunit protein uS5 (173 aa).

The S5 DRBM domain occupies 18–81 (LREKMIAVNR…EQARRGMFKV (64 aa)).

It belongs to the universal ribosomal protein uS5 family. Part of the 30S ribosomal subunit. Contacts proteins S4 and S8.

With S4 and S12 plays an important role in translational accuracy. Its function is as follows. Located at the back of the 30S subunit body where it stabilizes the conformation of the head with respect to the body. This is Small ribosomal subunit protein uS5 from Bordetella petrii (strain ATCC BAA-461 / DSM 12804 / CCUG 43448).